The sequence spans 241 residues: Pyridoxine 5'-phosphate synthase (241 aa).

Asn7 is a 3-amino-2-oxopropyl phosphate binding site. 9 to 10 is a binding site for 1-deoxy-D-xylulose 5-phosphate; it reads DH. Arg18 is a binding site for 3-amino-2-oxopropyl phosphate. His43 (proton acceptor) is an active-site residue. 1-deoxy-D-xylulose 5-phosphate-binding residues include Arg45 and His50. Residue Glu70 is the Proton acceptor of the active site. Residue Thr100 participates in 1-deoxy-D-xylulose 5-phosphate binding. Catalysis depends on His191, which acts as the Proton donor. 3-amino-2-oxopropyl phosphate is bound by residues Ser192 and 213–214; that span reads GH.

The protein belongs to the PNP synthase family. Homooctamer; tetramer of dimers.

It localises to the cytoplasm. The catalysed reaction is 3-amino-2-oxopropyl phosphate + 1-deoxy-D-xylulose 5-phosphate = pyridoxine 5'-phosphate + phosphate + 2 H2O + H(+). It participates in cofactor biosynthesis; pyridoxine 5'-phosphate biosynthesis; pyridoxine 5'-phosphate from D-erythrose 4-phosphate: step 5/5. Functionally, catalyzes the complicated ring closure reaction between the two acyclic compounds 1-deoxy-D-xylulose-5-phosphate (DXP) and 3-amino-2-oxopropyl phosphate (1-amino-acetone-3-phosphate or AAP) to form pyridoxine 5'-phosphate (PNP) and inorganic phosphate. The chain is Pyridoxine 5'-phosphate synthase from Nitrosomonas eutropha (strain DSM 101675 / C91 / Nm57).